The primary structure comprises 389 residues: Alcohol dehydrogenase-like 5 (389 aa).

The Zn(2+) site is built by cysteine 54, threonine 56, histidine 77, cysteine 107, cysteine 110, cysteine 113, cysteine 121, and cysteine 186. An alcohol contacts are provided by threonine 56 and histidine 77. Threonine 56 lines the NAD(+) pocket. Residues glycine 211 to glycine 216, aspartate 235, lysine 240, leucine 305 to isoleucine 307, phenylalanine 332, and arginine 382 each bind NAD(+).

Belongs to the zinc-containing alcohol dehydrogenase family. Class-III subfamily. Homodimer. The cofactor is Zn(2+).

The protein resides in the cytoplasm. It carries out the reaction a primary alcohol + NAD(+) = an aldehyde + NADH + H(+). The enzyme catalyses a secondary alcohol + NAD(+) = a ketone + NADH + H(+). This Arabidopsis thaliana (Mouse-ear cress) protein is Alcohol dehydrogenase-like 5.